A 313-amino-acid polypeptide reads, in one-letter code: Protein FixB (313 aa).

255–283 (LYLAVGISGQIQHMVGANASQTIFAINKD) contacts FAD.

Belongs to the ETF alpha-subunit/FixB family. As to quaternary structure, heterodimer of FixA and FixB.

It participates in amine and polyamine metabolism; carnitine metabolism. Its function is as follows. Required for anaerobic carnitine reduction. May bring reductant to CaiA. The protein is Protein FixB of Shigella flexneri.